The following is a 570-amino-acid chain: Probable glucomannan 4-beta-mannosyltransferase 11 (570 aa).

A helical membrane pass occupies residues 57-77 (LAMTVMILAEKLFVAAVCLAV). D157 is a catalytic residue. Substrate-binding residues include D216 and D218. Residue D310 is part of the active site. The next 4 membrane-spanning stretches (helical) occupy residues 389 to 409 (IAAH…SVWL), 412 to 432 (IEIP…CKAV), 522 to 542 (YSEI…VLYA), and 548 to 568 (IFLF…IGVC).

This sequence belongs to the glycosyltransferase 2 family. Plant cellulose synthase-like A subfamily.

It localises to the golgi apparatus membrane. It catalyses the reaction GDP-mannose + (glucomannan)n = GDP + (glucomannan)n+1.. Its function is as follows. Probable mannan synthase which consists of a 4-beta-mannosyltransferase activity on mannan using GDP-mannose. The beta-1,4-mannan product is the backbone for galactomannan synthesis by galactomannan galactosyltransferase. Galactomannan is a noncellulosic polysaccharides of plant cell wall. The sequence is that of Probable glucomannan 4-beta-mannosyltransferase 11 from Oryza sativa subsp. japonica (Rice).